The primary structure comprises 304 residues: Carbonic anhydrase 5A, mitochondrial (304 aa).

The N-terminal 34 residues, 1–34, are a transit peptide targeting the mitochondrion; it reads MLRAKMLGRGPYKPLAILRHMGPLCATRPQHWRF. In terms of domain architecture, Alpha-carbonic anhydrase spans 35 to 295; sequence QHSYAEKHSN…LRGRNVRSSF (261 aa). H129, H131, and H154 together coordinate Zn(2+).

Belongs to the alpha-carbonic anhydrase family. Zn(2+) is required as a cofactor. As to expression, high in liver, also detected in heart, lung, kidney, spleen and intestine.

It localises to the mitochondrion. The enzyme catalyses hydrogencarbonate + H(+) = CO2 + H2O. Its function is as follows. Mitochondrial carbonic anhydrase that catalyzes the reversible conversion of carbon dioxide to bicarbonate/HCO3. Mitochondria are impermeable to HCO3, and thus this intramitochondrial carbonic anhydrase is pivotal in providing HCO3 for multiple mitochondrial enzymes that catalyze the formation of essential metabolites of intermediary metabolism in the urea and Krebs cycles. The chain is Carbonic anhydrase 5A, mitochondrial from Rattus norvegicus (Rat).